The following is a 398-amino-acid chain: Lipoyl synthase, mitochondrial (398 aa).

The N-terminal 32 residues, 1-32 (MIALRVHNTRVVSRSLTVWTRPSPTLTLSRSL), are a transit peptide targeting the mitochondrion. Positions 117, 122, 128, 147, 151, 154, and 362 each coordinate [4Fe-4S] cluster. Positions 132–351 (KKSEATATIM…RDTALEMGFL (220 aa)) constitute a Radical SAM core domain.

The protein belongs to the radical SAM superfamily. Lipoyl synthase family. The cofactor is [4Fe-4S] cluster.

The protein resides in the mitochondrion. The enzyme catalyses [[Fe-S] cluster scaffold protein carrying a second [4Fe-4S](2+) cluster] + N(6)-octanoyl-L-lysyl-[protein] + 2 oxidized [2Fe-2S]-[ferredoxin] + 2 S-adenosyl-L-methionine + 4 H(+) = [[Fe-S] cluster scaffold protein] + N(6)-[(R)-dihydrolipoyl]-L-lysyl-[protein] + 4 Fe(3+) + 2 hydrogen sulfide + 2 5'-deoxyadenosine + 2 L-methionine + 2 reduced [2Fe-2S]-[ferredoxin]. It participates in protein modification; protein lipoylation via endogenous pathway; protein N(6)-(lipoyl)lysine from octanoyl-[acyl-carrier-protein]: step 2/2. Its function is as follows. Catalyzes the radical-mediated insertion of two sulfur atoms into the C-6 and C-8 positions of the octanoyl moiety bound to the lipoyl domains of lipoate-dependent enzymes, thereby converting the octanoylated domains into lipoylated derivatives. This Scheffersomyces stipitis (strain ATCC 58785 / CBS 6054 / NBRC 10063 / NRRL Y-11545) (Yeast) protein is Lipoyl synthase, mitochondrial.